The primary structure comprises 273 residues: Large ribosomal subunit protein uL2cz/uL2cy (273 aa).

Disordered stretches follow at residues Met-1 to Lys-23 and Asn-224 to Lys-273. Residues Lys-262 to Lys-273 show a composition bias toward basic and acidic residues.

It belongs to the universal ribosomal protein uL2 family. Part of the 50S ribosomal subunit.

The protein localises to the plastid. It is found in the chloroplast. This chain is Large ribosomal subunit protein uL2cz/uL2cy (rpl2-A), found in Acorus calamus var. americanus (American sweet flag).